The sequence spans 372 residues: Alanine dehydrogenase 2 (372 aa).

His95 is an active-site residue. An NAD(+)-binding site is contributed by 169 to 199; it reads KVTIIGGGQAGTNAAKIALGLGADVTILDVN.

This sequence belongs to the AlaDH/PNT family.

The catalysed reaction is L-alanine + NAD(+) + H2O = pyruvate + NH4(+) + NADH + H(+). It functions in the pathway amino-acid degradation; L-alanine degradation via dehydrogenase pathway; NH(3) and pyruvate from L-alanine: step 1/1. Functionally, may play a role in cell wall synthesis as L-alanine is an important constituent of the peptidoglycan layer. This is Alanine dehydrogenase 2 (ald2) from Staphylococcus aureus (strain Mu50 / ATCC 700699).